We begin with the raw amino-acid sequence, 451 residues long: Serine--tRNA ligase (451 aa).

258–260 (TSE) is an L-serine binding site. An ATP-binding site is contributed by 289 to 291 (RSE). E312 is a binding site for L-serine. 376 to 379 (EISS) contributes to the ATP binding site. S411 provides a ligand contact to L-serine.

The protein belongs to the class-II aminoacyl-tRNA synthetase family. Type-1 seryl-tRNA synthetase subfamily. In terms of assembly, homodimer. The tRNA molecule binds across the dimer.

The protein localises to the cytoplasm. It catalyses the reaction tRNA(Ser) + L-serine + ATP = L-seryl-tRNA(Ser) + AMP + diphosphate + H(+). The catalysed reaction is tRNA(Sec) + L-serine + ATP = L-seryl-tRNA(Sec) + AMP + diphosphate + H(+). It functions in the pathway aminoacyl-tRNA biosynthesis; selenocysteinyl-tRNA(Sec) biosynthesis; L-seryl-tRNA(Sec) from L-serine and tRNA(Sec): step 1/1. Its function is as follows. Catalyzes the attachment of serine to tRNA(Ser). Is also able to aminoacylate tRNA(Sec) with serine, to form the misacylated tRNA L-seryl-tRNA(Sec), which will be further converted into selenocysteinyl-tRNA(Sec). The polypeptide is Serine--tRNA ligase (Bordetella bronchiseptica (strain ATCC BAA-588 / NCTC 13252 / RB50) (Alcaligenes bronchisepticus)).